Consider the following 300-residue polypeptide: F-box protein SKIP1 (300 aa).

Positions 11–52 constitute an F-box; degenerate domain; it reads LAPEILINIISRLTIQELWTGPMFVQKSWLTVCRDPYLWSIF.

Part of a SCF (ASK-cullin-F-box) protein ligase complex. Interacts with SKP1A/ASK1 and SKP1B/ASK2.

It localises to the nucleus. It functions in the pathway protein modification; protein ubiquitination. Component of SCF(ASK-cullin-F-box) E3 ubiquitin ligase complexes, which may mediate the ubiquitination and subsequent proteasomal degradation of target proteins. The chain is F-box protein SKIP1 (SKIP1) from Arabidopsis thaliana (Mouse-ear cress).